A 494-amino-acid polypeptide reads, in one-letter code: ATP synthase subunit beta, plastid (494 aa).

169-176 (GGAGVGKT) lines the ATP pocket.

This sequence belongs to the ATPase alpha/beta chains family. F-type ATPases have 2 components, CF(1) - the catalytic core - and CF(0) - the membrane proton channel. CF(1) has five subunits: alpha(3), beta(3), gamma(1), delta(1), epsilon(1). CF(0) has four main subunits: a(1), b(1), b'(1) and c(9-12).

Its subcellular location is the plastid membrane. The enzyme catalyses ATP + H2O + 4 H(+)(in) = ADP + phosphate + 5 H(+)(out). Its function is as follows. Produces ATP from ADP in the presence of a proton gradient across the membrane. The catalytic sites are hosted primarily by the beta subunits. The sequence is that of ATP synthase subunit beta, plastid (atpB) from Cuscuta sandwichiana (Kauna'oa).